The following is a 297-amino-acid chain: PsbP domain-containing protein 5, chloroplastic (297 aa).

This sequence belongs to the PsbP family.

It is found in the plastid. It localises to the chloroplast thylakoid lumen. In terms of biological role, involved in strigolactone biosynthesis. The protein is PsbP domain-containing protein 5, chloroplastic (PPD5) of Arabidopsis thaliana (Mouse-ear cress).